Consider the following 214-residue polypeptide: Single-pass membrane and coiled-coil domain-containing protein 1 (214 aa).

The stretch at 5 to 40 (TTTLISLKEAMKRVDNKLRALDTQFKELDVTKDNLT) forms a coiled coil. A helical membrane pass occupies residues 59-81 (IWTAALALGFTSMELNIVYSYVI). The disordered stretch occupies residues 193–214 (KQAQDPENSRAPLKELMPPVKD).

The protein resides in the membrane. This chain is Single-pass membrane and coiled-coil domain-containing protein 1 (Smco1), found in Mus musculus (Mouse).